The chain runs to 354 residues: Elongation factor Ts (354 aa).

The tract at residues 81–84 (TDFV) is involved in Mg(2+) ion dislocation from EF-Tu.

This sequence belongs to the EF-Ts family.

The protein resides in the cytoplasm. Its function is as follows. Associates with the EF-Tu.GDP complex and induces the exchange of GDP to GTP. It remains bound to the aminoacyl-tRNA.EF-Tu.GTP complex up to the GTP hydrolysis stage on the ribosome. This chain is Elongation factor Ts, found in Campylobacter concisus (strain 13826).